We begin with the raw amino-acid sequence, 186 residues long: UPF0301 protein HI_0304 (186 aa).

This sequence belongs to the UPF0301 (AlgH) family.

This Haemophilus influenzae (strain ATCC 51907 / DSM 11121 / KW20 / Rd) protein is UPF0301 protein HI_0304.